A 267-amino-acid polypeptide reads, in one-letter code: WUSCHEL-related homeobox 8 (267 aa).

The homeobox; WUS-type DNA-binding region spans 88 to 152 (TARQRWTPTP…NRRARSKRKQ (65 aa)). The interval 148 to 195 (SKRKQAALPNNNAESEAEADEESPTDKKPKSDRPLHQNIAMRDHNSER) is disordered. The span at 171–195 (PTDKKPKSDRPLHQNIAMRDHNSER) shows a compositional bias: basic and acidic residues.

The protein belongs to the WUS homeobox family.

The protein localises to the nucleus. Functionally, transcription factor which may be involved in developmental processes. This is WUSCHEL-related homeobox 8 (WOX8) from Oryza sativa subsp. japonica (Rice).